The following is a 757-amino-acid chain: MTAGSVCAPQIIPLRVPQPGKANHEIDTNTLLEMKSDTPDVNIYYTLDGSKPDFLKKVGSGENNTFKYIKPIALPDGKIQVKAVAVSKDCRQSGIVTKVFQVDYEPPKMVSSEDHGEDALKGFSKQELKNGFVGPKLRKKYKNAENKSTWNVNLRRLADLKVGERADPKTLKDLRFSESPLEIPAYHEGASARLPTHQAQSPGFAHITGQKSLTSTEVMRIQRETDFLKCAHCLASRPSDPFARFCQECGAPVPPIFGYRLPPPEGAQMGLCAECGSMVPMNTPICVVCEAPLAPQLRPQASLYLKERVICRTCGTGNPAHLRYCVTCEGTLPPTQEQWLCNGDEVPRLPTRNGETISCSRCGCQNLWEASFCDWCGAMLGISASHSVCPKCGASNHLTARFCGSCGIYVKSITRFRMNNSLAIVAGGPRPFPEPRSAWQSLNVPLPTPATGSKKDMGTQTSGLFYPSGKLLAKKELEAASHRQRQEKMSDHRPVLTAVSPGRGYWRKQLDHISAHLRSYAQNNPEFRALIAEPRMGKLISATVHEDGYEVSIRLNYIQVSNKNLYLNKSMNLSDHFLSSVTEGGNGLYGSRSSLVSAYSQSISDTPESIKKMKNPKAKSFLANPEPLTPENRLLLEEVGSTGKGRLSVLEQLLDEGADPNCCDSQGRPAVIVAVVNKHFEAIPVLAQRGADIDQQWGPFGNTALHEATLLGLEGRESVATLLGCNANTQKKNTRGQTAYDIALEMGDDLTSALFAD.

2 DZANK-type zinc fingers span residues 230-290 and 359-407; these read CAHC…VVCE and CSRC…GSCG. ANK repeat units follow at residues 631 to 662 and 666 to 695; these read ENRL…DPNC and QGRP…DIDQ.

As to quaternary structure, interacts with NINL. Associates with DYNC1H1 and multiple dynein intermediate and light chains as well as actin-binding proteins. As to expression, expressed in retina.

Its subcellular location is the cell projection. It localises to the cilium. In terms of biological role, involved in vesicle transport in photoreceptor cells. This chain is Double zinc ribbon and ankyrin repeat-containing protein 1, found in Rattus norvegicus (Rat).